The chain runs to 432 residues: Sonic hedgehog protein (432 aa).

An N-terminal signal peptide occupies residues 1–26 (MDEMILLRRVLLAGFICALLVPSGLS). The N-palmitoyl cysteine moiety is linked to residue Cys-27. Residues 35-41 (TRKRFKK) carry the Cardin-Weintraub motif. 7 residues coordinate Ca(2+): Glu-92, Glu-93, Asp-98, Thr-128, Glu-129, Asp-132, and Asp-134. The Zn(2+) site is built by His-143, Asp-150, and His-185. Gly-200 carries Cholesterol glycine ester lipidation.

Belongs to the hedgehog family. As to quaternary structure, interacts with HHATL/GUP1 which negatively regulates HHAT-mediated palmitoylation of the SHH N-terminus. Interacts with BOC and CDON. Interacts with HHIP. Interacts with DISP1 via its cholesterol anchor. Interacts with SCUBE2. Multimer. In terms of processing, the C-terminal domain displays an autoproteolysis activity and a cholesterol transferase activity. Both activities result in the cleavage of the full-length protein and covalent attachment of a cholesterol moiety to the C-terminal of the newly generated N-terminal fragment (ShhN). Cholesterylation is required for the sonic hedgehog protein N-product targeting to lipid rafts and multimerization. ShhN is the active species in both local and long-range signaling, whereas the C-product (ShhC) is degraded in the reticulum endoplasmic. N-palmitoylation by HHAT of ShhN is required for sonic hedgehog protein N-product multimerization and full activity. It is a prerequisite for the membrane-proximal positioning and the subsequent shedding of this N-terminal peptide. Post-translationally, the lipidated N- and C-terminal peptides of ShhNp can be cleaved (shedding). The N-terminal palmitoylated peptide is cleaved at the Cardin-Weintraub (CW) motif site. The cleavage reduced the interactions with heparan sulfate. The cleavage is enhanced by SCUBE2.

The protein resides in the endoplasmic reticulum membrane. It is found in the golgi apparatus membrane. Its subcellular location is the cell membrane. It carries out the reaction glycyl-L-cysteinyl-[protein] + cholesterol + H(+) = [protein]-C-terminal glycyl cholesterol ester + N-terminal L-cysteinyl-[protein]. Functionally, the C-terminal part of the sonic hedgehog protein precursor displays an autoproteolysis and a cholesterol transferase activity. Both activities result in the cleavage of the full-length protein into two parts (ShhN and ShhC) followed by the covalent attachment of a cholesterol moiety to the C-terminal of the newly generated ShhN. Both activities occur in the endoplasmic reticulum. Once cleaved, ShhC is degraded in the endoplasmic reticulum. In terms of biological role, the dually lipidated sonic hedgehog protein N-product (ShhNp) is a morphogen which is essential for a variety of patterning events during development. Induces ventral cell fate in the neural tube and somites. Involved in the patterning of the anterior-posterior axis of the developing limb bud. Essential for axon guidance. Binds to the patched (PTCH1) receptor, which functions in association with smoothened (SMO), to activate the transcription of target genes. In the absence of SHH, PTCH1 represses the constitutive signaling activity of SMO. The protein is Sonic hedgehog protein of Cynops pyrrhogaster (Japanese fire-bellied newt).